Here is a 262-residue protein sequence, read N- to C-terminus: MKHILLTNDDGYDSVGLKALIDALSPIAKITVVAPANNKSACGHSLTLDKPLRLISIKDDFYKIDDGSPTDCIFLSLGNLFKEGFKPDLVISGINIGANMGEDITYSGTASAAMEAVIHKIPAIAISQVCQNRCQDIQNGWEFELAKDTIVKLATRILNNSFPLDERKFLNVNIPPIKPNECKGMKITKAGFREYGTDSDRHINPRGEEYYWIGLHPLIWKASEDQSCDFEAIKENYVSISPIKLDMTSYDDLKNLENWLNN.

4 residues coordinate a divalent metal cation: D9, D10, S40, and N95.

It belongs to the SurE nucleotidase family. Requires a divalent metal cation as cofactor.

It localises to the cytoplasm. It catalyses the reaction a ribonucleoside 5'-phosphate + H2O = a ribonucleoside + phosphate. In terms of biological role, nucleotidase that shows phosphatase activity on nucleoside 5'-monophosphates. The polypeptide is 5'-nucleotidase SurE (Aliarcobacter butzleri (strain RM4018) (Arcobacter butzleri)).